A 287-amino-acid polypeptide reads, in one-letter code: Lectin 10 (287 aa).

Over Met-1 to Thr-11 the chain is Cytoplasmic. Residues Leu-12–Ile-31 form a helical membrane-spanning segment. Topologically, residues Lys-32 to Leu-287 are extracellular. N-linked (GlcNAc...) asparagine glycans are attached at residues Asn-124, Asn-147, Asn-243, and Asn-280.

It belongs to the leguminous lectin family.

It localises to the membrane. In terms of biological role, may be involved in arbuscular mycorrhizal (AM) symbiosis with AM fungi. The protein is Lectin 10 of Medicago truncatula (Barrel medic).